Consider the following 105-residue polypeptide: Large ribosomal subunit protein bL21c (105 aa).

This sequence belongs to the bacterial ribosomal protein bL21 family. Part of the 50S ribosomal subunit.

It localises to the plastid. The protein localises to the chloroplast. This protein binds to 23S rRNA. This chain is Large ribosomal subunit protein bL21c, found in Phaeodactylum tricornutum (strain CCAP 1055/1).